The following is a 377-amino-acid chain: Dihydroorotate dehydrogenase (quinone) (377 aa).

Residues 82–86 (AGFDK) and T106 each bind FMN. K86 contacts substrate. 131–135 (NRMGF) contacts substrate. FMN is bound by residues N159 and N192. N192 serves as a coordination point for substrate. The active-site Nucleophile is S195. N197 contacts substrate. K228 and T256 together coordinate FMN. 257 to 258 (NT) contributes to the substrate binding site. Residues G282, G311, and 332–333 (YT) each bind FMN.

It belongs to the dihydroorotate dehydrogenase family. Type 2 subfamily. Monomer. Requires FMN as cofactor.

The protein localises to the cell membrane. The catalysed reaction is (S)-dihydroorotate + a quinone = orotate + a quinol. The protein operates within pyrimidine metabolism; UMP biosynthesis via de novo pathway; orotate from (S)-dihydroorotate (quinone route): step 1/1. Functionally, catalyzes the conversion of dihydroorotate to orotate with quinone as electron acceptor. This Corynebacterium efficiens (strain DSM 44549 / YS-314 / AJ 12310 / JCM 11189 / NBRC 100395) protein is Dihydroorotate dehydrogenase (quinone).